The sequence spans 163 residues: D-aminoacyl-tRNA deacylase (163 aa).

Residues 141 to 142 carry the Gly-cisPro motif, important for rejection of L-amino acids motif; that stretch reads GP.

Belongs to the DTD family. As to quaternary structure, homodimer.

The protein resides in the cytoplasm. It carries out the reaction glycyl-tRNA(Ala) + H2O = tRNA(Ala) + glycine + H(+). The enzyme catalyses a D-aminoacyl-tRNA + H2O = a tRNA + a D-alpha-amino acid + H(+). Functionally, an aminoacyl-tRNA editing enzyme that deacylates mischarged D-aminoacyl-tRNAs. Also deacylates mischarged glycyl-tRNA(Ala), protecting cells against glycine mischarging by AlaRS. Acts via tRNA-based rather than protein-based catalysis; rejects L-amino acids rather than detecting D-amino acids in the active site. By recycling D-aminoacyl-tRNA to D-amino acids and free tRNA molecules, this enzyme counteracts the toxicity associated with the formation of D-aminoacyl-tRNA entities in vivo and helps enforce protein L-homochirality. This Neisseria meningitidis serogroup B (strain ATCC BAA-335 / MC58) protein is D-aminoacyl-tRNA deacylase.